Consider the following 162-residue polypeptide: MAVDMFIKIGDVKGESKDKTHAEEIDVLAWSWGMSQSGSMHMGGGGGAGKVNVQDLSFTKYIDKSTPNLMMACSSGKHYPQAKLTIRKAGGENQVEYLIITLKEVLVSSVSTGGSGGEDRLTENVTLNFAQVQVDYQPQKADGAKDGGPVKYGWNIRQNVQA.

This sequence belongs to the hcp1 family. As to quaternary structure, hexamer. Three hcp1 monomers form two closely related hexameric rings with a 40 Angstrom internal diameter.

It is found in the secreted. Required for assembly of the protein secretion apparatus HSI-I. Actively secreted during chronic infection of cystic fibrosis patients. In Pseudomonas aeruginosa (strain ATCC 15692 / DSM 22644 / CIP 104116 / JCM 14847 / LMG 12228 / 1C / PRS 101 / PAO1), this protein is Protein hcp1 (hcp1).